The primary structure comprises 432 residues: Adenylosuccinate synthetase (432 aa).

GTP is bound by residues 13-19 and 41-43; these read GDEGKGK and GHT. Catalysis depends on D14, which acts as the Proton acceptor. Mg(2+) is bound by residues D14 and G41. IMP-binding positions include 14-17, 39-42, T130, R144, Q225, T240, and R304; these read DEGK and NAGH. The active-site Proton donor is H42. 300–306 is a binding site for substrate; sequence ATTGRRR. Residues R306, 332-334, and 415-417 each bind GTP; these read KLD and STG.

It belongs to the adenylosuccinate synthetase family. In terms of assembly, homodimer. Mg(2+) is required as a cofactor.

It is found in the cytoplasm. It catalyses the reaction IMP + L-aspartate + GTP = N(6)-(1,2-dicarboxyethyl)-AMP + GDP + phosphate + 2 H(+). Its pathway is purine metabolism; AMP biosynthesis via de novo pathway; AMP from IMP: step 1/2. In terms of biological role, plays an important role in the de novo pathway of purine nucleotide biosynthesis. Catalyzes the first committed step in the biosynthesis of AMP from IMP. The chain is Adenylosuccinate synthetase from Enterobacter sp. (strain 638).